The sequence spans 449 residues: Tubulin beta-7 chain (449 aa).

GTP is bound by residues Q11, E69, S138, G142, T143, G144, N204, and N226. E69 is a binding site for Mg(2+). Residues 422-449 are disordered; it reads YQQYQDATADEEGEYEEEEAEYEQEETY. Over residues 429–449 the composition is skewed to acidic residues; the sequence is TADEEGEYEEEEAEYEQEETY.

This sequence belongs to the tubulin family. In terms of assembly, dimer of alpha and beta chains. A typical microtubule is a hollow water-filled tube with an outer diameter of 25 nm and an inner diameter of 15 nM. Alpha-beta heterodimers associate head-to-tail to form protofilaments running lengthwise along the microtubule wall with the beta-tubulin subunit facing the microtubule plus end conferring a structural polarity. Microtubules usually have 13 protofilaments but different protofilament numbers can be found in some organisms and specialized cells. It depends on Mg(2+) as a cofactor.

It localises to the cytoplasm. Its subcellular location is the cytoskeleton. In terms of biological role, tubulin is the major constituent of microtubules, a cylinder consisting of laterally associated linear protofilaments composed of alpha- and beta-tubulin heterodimers. Microtubules grow by the addition of GTP-tubulin dimers to the microtubule end, where a stabilizing cap forms. Below the cap, tubulin dimers are in GDP-bound state, owing to GTPase activity of alpha-tubulin. In Arabidopsis thaliana (Mouse-ear cress), this protein is Tubulin beta-7 chain (TUBB7).